The chain runs to 206 residues: High frequency lysogenization protein HflD homolog (206 aa).

It belongs to the HflD family.

The protein localises to the cytoplasm. It is found in the cell inner membrane. This Pseudomonas syringae pv. syringae (strain B728a) protein is High frequency lysogenization protein HflD homolog.